Here is an 865-residue protein sequence, read N- to C-terminus: Catenin alpha-2 (865 aa).

Residues 823–839 (PEKKPLVKREKPEECQT) are compositionally biased toward basic and acidic residues. Positions 823–851 (PEKKPLVKREKPEECQTRVRRGSQKKHIS) are disordered. Basic residues predominate over residues 840 to 850 (RVRRGSQKKHI).

The protein belongs to the vinculin/alpha-catenin family.

Its subcellular location is the cell membrane. The protein localises to the cytoplasm. It localises to the cytoskeleton. The protein resides in the cell junction. It is found in the adherens junction. Its subcellular location is the cell projection. The protein localises to the axon. It localises to the nucleus. Functionally, may function as a linker between cadherin adhesion receptors and the cytoskeleton to regulate cell-cell adhesion and differentiation in the nervous system. The protein is Catenin alpha-2 (Ctnna2) of Danio rerio (Zebrafish).